An 814-amino-acid polypeptide reads, in one-letter code: S-layer protein sap (814 aa).

Positions 1–29 (MAKTNSYKKVIAGTMTAAMVAGVVSPVAA) are cleaved as a signal peptide. SLH domains are found at residues 30-93 (AGKT…DAKP), 94-150 (SFAD…KVNG), and 152-214 (PATK…AAKV). In terms of domain architecture, BIG2 spans 403 to 479 (FTSKDFKQNN…TVKDSKGKEL (77 aa)).

In terms of processing, probably glycosylated.

The protein localises to the secreted. The protein resides in the cell wall. It is found in the S-layer. Functionally, the S-layer is a paracrystalline mono-layered assembly of proteins which coat the surface of bacteria. This is S-layer protein sap (sap) from Bacillus anthracis.